We begin with the raw amino-acid sequence, 485 residues long: Probable glycine dehydrogenase (decarboxylating) subunit 2 (485 aa).

An N6-(pyridoxal phosphate)lysine modification is found at Lys273.

Belongs to the GcvP family. C-terminal subunit subfamily. In terms of assembly, the glycine cleavage system is composed of four proteins: P, T, L and H. In this organism, the P 'protein' is a heterodimer of two subunits. Requires pyridoxal 5'-phosphate as cofactor.

It catalyses the reaction N(6)-[(R)-lipoyl]-L-lysyl-[glycine-cleavage complex H protein] + glycine + H(+) = N(6)-[(R)-S(8)-aminomethyldihydrolipoyl]-L-lysyl-[glycine-cleavage complex H protein] + CO2. Functionally, the glycine cleavage system catalyzes the degradation of glycine. The P protein binds the alpha-amino group of glycine through its pyridoxal phosphate cofactor; CO(2) is released and the remaining methylamine moiety is then transferred to the lipoamide cofactor of the H protein. The polypeptide is Probable glycine dehydrogenase (decarboxylating) subunit 2 (Oceanobacillus iheyensis (strain DSM 14371 / CIP 107618 / JCM 11309 / KCTC 3954 / HTE831)).